We begin with the raw amino-acid sequence, 100 residues long: Co-chaperonin GroES (100 aa).

Belongs to the GroES chaperonin family. In terms of assembly, heptamer of 7 subunits arranged in a ring. Interacts with the chaperonin GroEL.

It localises to the cytoplasm. Functionally, together with the chaperonin GroEL, plays an essential role in assisting protein folding. The GroEL-GroES system forms a nano-cage that allows encapsulation of the non-native substrate proteins and provides a physical environment optimized to promote and accelerate protein folding. GroES binds to the apical surface of the GroEL ring, thereby capping the opening of the GroEL channel. The protein is Co-chaperonin GroES of Mycobacterium leprae (strain Br4923).